The chain runs to 157 residues: uncharacterized protein (157 aa).

The N-terminal stretch at 1 to 19 (MRKYLIILVLLLFLSSSFG) is a signal peptide.

This is an uncharacterized protein from Methanocaldococcus jannaschii (strain ATCC 43067 / DSM 2661 / JAL-1 / JCM 10045 / NBRC 100440) (Methanococcus jannaschii).